Here is a 334-residue protein sequence, read N- to C-terminus: Nucleoid-associated protein Pfl01_0983 (334 aa).

It belongs to the YejK family.

Its subcellular location is the cytoplasm. The protein localises to the nucleoid. This chain is Nucleoid-associated protein Pfl01_0983, found in Pseudomonas fluorescens (strain Pf0-1).